The primary structure comprises 376 residues: Coatomer subunit delta-4 (376 aa).

Residues 65 to 92 form a disordered region; that stretch reads LNTDTDTFTSRPKGRTSGGTTGAGKGIG. Residues 80-92 show a composition bias toward gly residues; that stretch reads TSGGTTGAGKGIG. The MHD domain maps to 134–376; it reads SDPVTVAVEE…RLVADNYQVV (243 aa).

The protein belongs to the adaptor complexes medium subunit family. Delta-COP subfamily. As to quaternary structure, oligomeric complex that consists of at least the alpha, beta, beta', gamma, delta, epsilon and zeta subunits.

It is found in the cytoplasm. It localises to the golgi apparatus membrane. The protein localises to the cytoplasmic vesicle. Its subcellular location is the COPI-coated vesicle membrane. In terms of biological role, the coatomer is a cytosolic protein complex that binds to dilysine motifs and reversibly associates with Golgi non-clathrin-coated vesicles, which further mediate biosynthetic protein transport from the ER, via the Golgi up to the trans Golgi network. Coatomer complex is required for budding from Golgi membranes, and is essential for the retrograde Golgi-to-ER transport of dilysine-tagged proteins. The sequence is that of Coatomer subunit delta-4 from Oryza sativa subsp. japonica (Rice).